Reading from the N-terminus, the 761-residue chain is Disintegrin and metalloproteinase domain-containing protein 24 (761 aa).

The signal sequence occupies residues 1-34 (MVAMSEALVHARITLLQAWLRMLLFSSVWPPTWC). A propeptide spanning residues 35-200 (AEYKGPPETV…GKSTRMQSIY (166 aa)) is cleaved from the precursor. At 35 to 697 (AEYKGPPETV…SKKDAPEKPN (663 aa)) the chain is on the extracellular side. Asn-140 is a glycosylation site (N-linked (GlcNAc...) asparagine). Positions 172-179 (MRCGLTDE) match the Cysteine switch motif. A Zn(2+)-binding site is contributed by Cys-174. Residues 208–400 (LYIKLALVID…KSCIHREPRP (193 aa)) enclose the Peptidase M12B domain. Residues Asn-227 and Asn-301 are each glycosylated (N-linked (GlcNAc...) asparagine). Intrachain disulfides connect Cys-323/Cys-393, Cys-357/Cys-379, Cys-359/Cys-364, Cys-465/Cys-485, Cys-635/Cys-646, Cys-640/Cys-652, and Cys-654/Cys-663. His-342 contributes to the Zn(2+) binding site. Residue Glu-343 is part of the active site. Residues His-346 and His-352 each contribute to the Zn(2+) site. N-linked (GlcNAc...) asparagine glycosylation is found at Asn-378, Asn-390, and Asn-479. A Disintegrin domain is found at 406–493 (LKVCGNGIVE…ECPEDLFVQD (88 aa)). Residues 631–664 (WVNDCTPETCNMKGVCNNKQHCHCDVGWSPPNCQ) enclose the EGF-like domain. Residues 698-718 (VIIWLLPIICVAVVLSVLFCL) traverse the membrane as a helical segment. Topologically, residues 719-761 (SGATKKSREAAASQPAEERVKPPYEGAEPSYETVKPPDEWANP) are cytoplasmic. Residues 725–761 (SREAAASQPAEERVKPPYEGAEPSYETVKPPDEWANP) are disordered.

Monomer. The cofactor is Zn(2+). In terms of processing, the prodomain is removed during sperm passage through the caput epididymis after the protein has reached the cell surface. Not processed in the secretory pathway. In terms of tissue distribution, expressed exclusively in testis and more specifically on the surface of mature sperm (at protein level).

It localises to the membrane. In terms of biological role, plasma membrane protease present on mature sperm that may be involved in sperm function during epididymal maturation and/or fertilization. This chain is Disintegrin and metalloproteinase domain-containing protein 24, found in Mus musculus (Mouse).